We begin with the raw amino-acid sequence, 297 residues long: 3-methyl-2-oxobutanoate hydroxymethyltransferase (297 aa).

Polar residues predominate over residues 1–12 (MSEQISEQSEQN). The disordered stretch occupies residues 1 to 36 (MSEQISEQSEQNVYGACPPVPAGESSPSAASAPRTK). A compositionally biased stretch (low complexity) spans 22 to 33 (AGESSPSAASAP). Mg(2+) contacts are provided by Asp-78 and Asp-117. 3-methyl-2-oxobutanoate contacts are provided by residues 78-79 (DS), Asp-117, and Lys-147. Residue Glu-149 participates in Mg(2+) binding. The Proton acceptor role is filled by Glu-215.

Belongs to the PanB family. Homodecamer; pentamer of dimers. Requires Mg(2+) as cofactor.

Its subcellular location is the cytoplasm. It catalyses the reaction 3-methyl-2-oxobutanoate + (6R)-5,10-methylene-5,6,7,8-tetrahydrofolate + H2O = 2-dehydropantoate + (6S)-5,6,7,8-tetrahydrofolate. Its pathway is cofactor biosynthesis; (R)-pantothenate biosynthesis; (R)-pantoate from 3-methyl-2-oxobutanoate: step 1/2. Catalyzes the reversible reaction in which hydroxymethyl group from 5,10-methylenetetrahydrofolate is transferred onto alpha-ketoisovalerate to form ketopantoate. The sequence is that of 3-methyl-2-oxobutanoate hydroxymethyltransferase from Mycobacterium ulcerans (strain Agy99).